We begin with the raw amino-acid sequence, 147 residues long: UPF0178 protein VP2328 (147 aa).

Belongs to the UPF0178 family.

This is UPF0178 protein VP2328 from Vibrio parahaemolyticus serotype O3:K6 (strain RIMD 2210633).